A 156-amino-acid chain; its full sequence is Ribosomal RNA large subunit methyltransferase H (156 aa).

Residues L73, G104, and 123 to 128 (LSPLTL) each bind S-adenosyl-L-methionine.

This sequence belongs to the RNA methyltransferase RlmH family. In terms of assembly, homodimer.

It localises to the cytoplasm. It carries out the reaction pseudouridine(1915) in 23S rRNA + S-adenosyl-L-methionine = N(3)-methylpseudouridine(1915) in 23S rRNA + S-adenosyl-L-homocysteine + H(+). Functionally, specifically methylates the pseudouridine at position 1915 (m3Psi1915) in 23S rRNA. This chain is Ribosomal RNA large subunit methyltransferase H, found in Yersinia pseudotuberculosis serotype O:1b (strain IP 31758).